A 332-amino-acid polypeptide reads, in one-letter code: MDIKTLHPAIAAAYRVLETGEPISLEEAELLASLPGEFSLDLASLANKVRNRWGKGGIHACSIMNAKSGVCGENCRFCAQSRHNHADIEVYPLVDEDAVLFEARSCAEHGVSHFGLVTSGYGYRTMNAEFKRILAMIDRLHEELPELNVCASIGILGPETAAALARHGIAHYNINLQVAPEKYAGLIADTHGIEERMETVRLLRREGVNVCCGGIIGVGESMEDRVAMLFALRDLDVSVIPINVLVPIEGTPLQAAESVPLADIVKVFALARLVHPHSIIKFAAGRETLMKDFQGLLMLSGADGYLTGGYLTTRGRDLADDQRFSERLASFS.

The 231-residue stretch at 53–283 folds into the Radical SAM core domain; the sequence is WGKGGIHACS…VHPHSIIKFA (231 aa). Residues Cys71, Cys75, and Cys78 each coordinate [4Fe-4S] cluster. Residues Cys150, Cys211, and Lys281 each coordinate [2Fe-2S] cluster.

It belongs to the radical SAM superfamily. Biotin synthase family. Homodimer. The cofactor is [4Fe-4S] cluster. It depends on [2Fe-2S] cluster as a cofactor.

It catalyses the reaction (4R,5S)-dethiobiotin + (sulfur carrier)-SH + 2 reduced [2Fe-2S]-[ferredoxin] + 2 S-adenosyl-L-methionine = (sulfur carrier)-H + biotin + 2 5'-deoxyadenosine + 2 L-methionine + 2 oxidized [2Fe-2S]-[ferredoxin]. Its pathway is cofactor biosynthesis; biotin biosynthesis; biotin from 7,8-diaminononanoate: step 2/2. In terms of biological role, catalyzes the conversion of dethiobiotin (DTB) to biotin by the insertion of a sulfur atom into dethiobiotin via a radical-based mechanism. This chain is Biotin synthase, found in Chlorobium phaeovibrioides (strain DSM 265 / 1930) (Prosthecochloris vibrioformis (strain DSM 265)).